The chain runs to 532 residues: MAQAPVSPVVLVILDGWGYRQSTEANAIALAKTPVMDCLWTSYPRTLIHTSGKDVGLPNGQMGNSEVGHLNLGAGRIVPQELVRISDAVEDKSLLRNPALVNICQEVRDRQSKLHLIGLCSDGGVHSHLDHLIGLLELAKEQHLDQVCIHVITDGRDTNTNEGINAVAKLESSIKEIGVGRIVTVSGRYYAMDRDRRWDRIQKAYDVYTQDRPGDGRSATEVIKDFYKNSITDEFIEPTRIAPGAIKSGDGVIFFNFRPDRARQLCYALTMPNFDGFERELIQPLSFVTFTQYDPKLPVKVAFEPQNLNNILGEVVAREGLKQFRTAETEKYPHVTYFFNGGLENPFEGEDRELIQSPMVATYDQAPAMSAETVTDTACNAIEKGIYSLVVINYANPDMVGHTGNLEAAIQAIETVDNCLGRLLTSISKMGGTVLITADHGNAELMVDENGNPWTAHSTNPVPLIIVEGEGRKIPGHGGAVDLADNGRLADIAPTILEILQLPKPEEMTGRSLIEPIHLEIKQNRTPVRISR.

Residues Asp15 and Ser65 each coordinate Mn(2+). Ser65 (phosphoserine intermediate) is an active-site residue. Substrate-binding positions include His126, 156 to 157 (RD), Arg188, Arg194, 258 to 261 (RPDR), and Lys331. 5 residues coordinate Mn(2+): Asp398, His402, Asp439, His440, and His457.

Belongs to the BPG-independent phosphoglycerate mutase family. Monomer. Requires Mn(2+) as cofactor.

The catalysed reaction is (2R)-2-phosphoglycerate = (2R)-3-phosphoglycerate. It participates in carbohydrate degradation; glycolysis; pyruvate from D-glyceraldehyde 3-phosphate: step 3/5. Catalyzes the interconversion of 2-phosphoglycerate and 3-phosphoglycerate. This Rippkaea orientalis (strain PCC 8801 / RF-1) (Cyanothece sp. (strain PCC 8801)) protein is 2,3-bisphosphoglycerate-independent phosphoglycerate mutase.